Reading from the N-terminus, the 382-residue chain is Adenosine 3'-phospho 5'-phosphosulfate transporter 2 (382 aa).

A compositionally biased stretch (polar residues) spans 1 to 10; it reads MSVSNRNGNG. Positions 1–33 are disordered; sequence MSVSNRNGNGSEVIYVGDRSTNRPPRNAPSPDE. 10 consecutive transmembrane segments (helical) span residues 56 to 76, 83 to 103, 121 to 141, 144 to 164, 170 to 190, 197 to 217, 234 to 254, 271 to 291, 299 to 319, and 323 to 343; these read LCCA…ELIF, PYGW…GYVE, VLLA…LGYL, PTQV…SILI, GPLD…FTLA, NFNP…AAIG, VVIY…LLTG, FGYA…VLTL, LAAT…FVFF, and FTIN…LNVY.

It belongs to the nucleotide-sugar transporter family. SLC35B subfamily.

It localises to the golgi apparatus membrane. Functionally, mediates the transport of adenosine 3'-phospho 5'-phosphosulfate (PAPS), from cytosol into Golgi. PAPS is a universal sulfuryl donor for sulfation events that take place in the Golgi. Essential for viability. Involved in glycosaminoglycan synthesis and the subsequent signaling. May be involved in hh and dpp signaling by controlling the sulfation of heparan sulfate (HS). The sequence is that of Adenosine 3'-phospho 5'-phosphosulfate transporter 2 from Aedes aegypti (Yellowfever mosquito).